We begin with the raw amino-acid sequence, 85 residues long: Putative membrane protein insertion efficiency factor (85 aa).

Residues 62–85 (PLGSDGYDPVPEPKDRKPPHSPAG) are disordered.

It belongs to the UPF0161 family.

Its subcellular location is the cell inner membrane. Its function is as follows. Could be involved in insertion of integral membrane proteins into the membrane. In Ruegeria pomeroyi (strain ATCC 700808 / DSM 15171 / DSS-3) (Silicibacter pomeroyi), this protein is Putative membrane protein insertion efficiency factor.